Reading from the N-terminus, the 302-residue chain is Succinate--CoA ligase [ADP-forming] subunit alpha (302 aa).

CoA is bound by residues 17–20, K43, and 96–98; these read TGST and ITE. Y159 contributes to the substrate binding site. Residue H247 is the Tele-phosphohistidine intermediate of the active site.

Belongs to the succinate/malate CoA ligase alpha subunit family. As to quaternary structure, heterotetramer of two alpha and two beta subunits.

It carries out the reaction succinate + ATP + CoA = succinyl-CoA + ADP + phosphate. The enzyme catalyses GTP + succinate + CoA = succinyl-CoA + GDP + phosphate. Its pathway is carbohydrate metabolism; tricarboxylic acid cycle; succinate from succinyl-CoA (ligase route): step 1/1. Its function is as follows. Succinyl-CoA synthetase functions in the citric acid cycle (TCA), coupling the hydrolysis of succinyl-CoA to the synthesis of either ATP or GTP and thus represents the only step of substrate-level phosphorylation in the TCA. The alpha subunit of the enzyme binds the substrates coenzyme A and phosphate, while succinate binding and nucleotide specificity is provided by the beta subunit. The polypeptide is Succinate--CoA ligase [ADP-forming] subunit alpha (Staphylococcus aureus (strain MRSA252)).